The following is an 860-amino-acid chain: Rod cGMP-specific 3',5'-cyclic phosphodiesterase subunit alpha (860 aa).

Glycine 2 carries the post-translational modification N-acetylglycine. GAF domains follow at residues 73-222 and 254-431; these read QTEK…NLIM and DIER…GWSV. A PDEase domain is found at 483-816; it reads EEEELAEILQ…KEWKALADEY (334 aa). The Proton donor role is filled by histidine 559. Residues histidine 563, histidine 599, aspartate 600, and aspartate 720 each coordinate a divalent metal cation. A disordered region spans residues 821–860; it reads KVQEEKKQKQQSAKSAAAGNQPGGNPSPGGATTSKSCCIQ. Over residues 830-851 the composition is skewed to low complexity; sequence QQSAKSAAAGNQPGGNPSPGGA. Position 857 is a cysteine methyl ester (cysteine 857). Cysteine 857 carries S-farnesyl cysteine lipidation. Residues 858–860 constitute a propeptide, removed in mature form; sequence CIQ.

It belongs to the cyclic nucleotide phosphodiesterase family. As to quaternary structure, oligomer composed of two catalytic chains (alpha and beta), an inhibitory chain (gamma) and the delta chain. Requires a divalent metal cation as cofactor.

It is found in the cell membrane. The protein localises to the cell projection. The protein resides in the cilium. Its subcellular location is the photoreceptor outer segment. The catalysed reaction is 3',5'-cyclic GMP + H2O = GMP + H(+). Rod-specific cGMP phosphodiesterase that catalyzes the hydrolysis of 3',5'-cyclic GMP. This protein participates in processes of transmission and amplification of the visual signal. The protein is Rod cGMP-specific 3',5'-cyclic phosphodiesterase subunit alpha of Homo sapiens (Human).